The chain runs to 552 residues: Membrane protein insertase YidC (552 aa).

A helical membrane pass occupies residues 6 to 26 (NLLLAAIAAVILMLFIRWNHF). Composition is skewed to polar residues over residues 32–41 (QHQAGNTPAG) and 60–70 (PTASDTPQATA). Residues 32–70 (QHQAGNTPAGSSIAAIAPDSNGDIPSAVPTASDTPQATA) form a disordered region. 4 helical membrane passes run 365 to 387 (WGLA…SAAS), 431 to 451 (FGGC…YWVL), 472 to 492 (MDPY…MQKL), and 508 to 528 (LPFV…LYWV).

The protein belongs to the OXA1/ALB3/YidC family. Type 1 subfamily. As to quaternary structure, interacts with the Sec translocase complex via SecD. Specifically interacts with transmembrane segments of nascent integral membrane proteins during membrane integration.

The protein resides in the cell inner membrane. Required for the insertion and/or proper folding and/or complex formation of integral membrane proteins into the membrane. Involved in integration of membrane proteins that insert both dependently and independently of the Sec translocase complex, as well as at least some lipoproteins. Aids folding of multispanning membrane proteins. The sequence is that of Membrane protein insertase YidC from Cellvibrio japonicus (strain Ueda107) (Pseudomonas fluorescens subsp. cellulosa).